We begin with the raw amino-acid sequence, 171 residues long: Crossover junction endodeoxyribonuclease RuvC (171 aa).

Active-site residues include Asp-7, Glu-66, and Asp-138. Residues Asp-7, Glu-66, and Asp-138 each contribute to the Mg(2+) site.

It belongs to the RuvC family. In terms of assembly, homodimer which binds Holliday junction (HJ) DNA. The HJ becomes 2-fold symmetrical on binding to RuvC with unstacked arms; it has a different conformation from HJ DNA in complex with RuvA. In the full resolvosome a probable DNA-RuvA(4)-RuvB(12)-RuvC(2) complex forms which resolves the HJ. The cofactor is Mg(2+).

It is found in the cytoplasm. It carries out the reaction Endonucleolytic cleavage at a junction such as a reciprocal single-stranded crossover between two homologous DNA duplexes (Holliday junction).. The RuvA-RuvB-RuvC complex processes Holliday junction (HJ) DNA during genetic recombination and DNA repair. Endonuclease that resolves HJ intermediates. Cleaves cruciform DNA by making single-stranded nicks across the HJ at symmetrical positions within the homologous arms, yielding a 5'-phosphate and a 3'-hydroxyl group; requires a central core of homology in the junction. The consensus cleavage sequence is 5'-(A/T)TT(C/G)-3'. Cleavage occurs on the 3'-side of the TT dinucleotide at the point of strand exchange. HJ branch migration catalyzed by RuvA-RuvB allows RuvC to scan DNA until it finds its consensus sequence, where it cleaves and resolves the cruciform DNA. In Francisella tularensis subsp. mediasiatica (strain FSC147), this protein is Crossover junction endodeoxyribonuclease RuvC.